We begin with the raw amino-acid sequence, 556 residues long: 2-succinyl-5-enolpyruvyl-6-hydroxy-3-cyclohexene-1-carboxylate synthase (556 aa).

The protein belongs to the TPP enzyme family. MenD subfamily. In terms of assembly, homodimer. Mg(2+) is required as a cofactor. It depends on Mn(2+) as a cofactor. The cofactor is thiamine diphosphate.

It carries out the reaction isochorismate + 2-oxoglutarate + H(+) = 5-enolpyruvoyl-6-hydroxy-2-succinyl-cyclohex-3-ene-1-carboxylate + CO2. It participates in quinol/quinone metabolism; 1,4-dihydroxy-2-naphthoate biosynthesis; 1,4-dihydroxy-2-naphthoate from chorismate: step 2/7. The protein operates within quinol/quinone metabolism; menaquinone biosynthesis. In terms of biological role, catalyzes the thiamine diphosphate-dependent decarboxylation of 2-oxoglutarate and the subsequent addition of the resulting succinic semialdehyde-thiamine pyrophosphate anion to isochorismate to yield 2-succinyl-5-enolpyruvyl-6-hydroxy-3-cyclohexene-1-carboxylate (SEPHCHC). The chain is 2-succinyl-5-enolpyruvyl-6-hydroxy-3-cyclohexene-1-carboxylate synthase from Staphylococcus epidermidis (strain ATCC 12228 / FDA PCI 1200).